The following is a 149-amino-acid chain: 3-hydroxyacyl-[acyl-carrier-protein] dehydratase FabZ (149 aa).

Histidine 53 is an active-site residue.

This sequence belongs to the thioester dehydratase family. FabZ subfamily.

Its subcellular location is the cytoplasm. The enzyme catalyses a (3R)-hydroxyacyl-[ACP] = a (2E)-enoyl-[ACP] + H2O. Its function is as follows. Involved in unsaturated fatty acids biosynthesis. Catalyzes the dehydration of short chain beta-hydroxyacyl-ACPs and long chain saturated and unsaturated beta-hydroxyacyl-ACPs. The protein is 3-hydroxyacyl-[acyl-carrier-protein] dehydratase FabZ of Polynucleobacter asymbioticus (strain DSM 18221 / CIP 109841 / QLW-P1DMWA-1) (Polynucleobacter necessarius subsp. asymbioticus).